The primary structure comprises 645 residues: MNVINCEEVKRDEFHTEKYYESYNIFGAHVVTEDEIQGVRFTVWAPHAKAMSVVGDFNEWDYEQHKMLQVTEEGIWSLFIPHIEEGEIYKYAIETLAGDVILKADPYAVYAEVRPNTASVVFDIKGYEWNDKNWNRKKKKKSIYKEAMTVYELHFGSWKKKEDGTLYSYREMVEELIPYVVEHQFTHIEIMPLVEHPYDRSWGYQGTGYYAATSRFGTPHDLMHFVDECHKYGIGVILDWVPGHFCKDAHGLYLFDGTPTYEYKDKDVQENPVWGTVNFDLGKREVRNFLISNALFWMRYFHIDGFRVDAVANMLYWNKEGQEQSNEHAVSFLRELNEAVFAEDEDFLMTAEDSTAWPLVTTPTYEGGLGFNYKWNMGWMNDVLKYMECAPEYRKHIHEKMTFSLLYAYSENFILPLSHDEVVHGKKSLLNKMPGDYWDKFAQLRLLYGYFFTHPGKKLLFMGGEFGQFDEWKDLEDLDWNLHDFEMHRYMHDYFKELIALYKRSKPLWQLDHSPEGFQWIDANNNEQSIFSFIRQGDKQEDALVIVCNFTKATYENYKVGVPDFEYYNEILNSDAQQYGGSGQVNKKRLKTILEPYHNQAAHVEITIPPFGVSILRPVKTRKGSKKQDGSKTKVRSNVTSRGKR.

Residue aspartate 309 is the Nucleophile of the active site. The active-site Proton donor is the glutamate 352. The interval 619 to 645 is disordered; the sequence is VKTRKGSKKQDGSKTKVRSNVTSRGKR. Residues 636-645 are compositionally biased toward polar residues; it reads RSNVTSRGKR.

Belongs to the glycosyl hydrolase 13 family. GlgB subfamily. In terms of assembly, monomer.

It carries out the reaction Transfers a segment of a (1-&gt;4)-alpha-D-glucan chain to a primary hydroxy group in a similar glucan chain.. It participates in glycan biosynthesis; glycogen biosynthesis. Its function is as follows. Catalyzes the formation of the alpha-1,6-glucosidic linkages in glycogen by scission of a 1,4-alpha-linked oligosaccharide from growing alpha-1,4-glucan chains and the subsequent attachment of the oligosaccharide to the alpha-1,6 position. The chain is 1,4-alpha-glucan branching enzyme GlgB from Bacillus cereus (strain ATCC 14579 / DSM 31 / CCUG 7414 / JCM 2152 / NBRC 15305 / NCIMB 9373 / NCTC 2599 / NRRL B-3711).